Reading from the N-terminus, the 180-residue chain is Cytokinin-beta-glucosidase (180 aa).

As to expression, accumulates in young leaves and shoot tips.

Its function is as follows. Hydrolyzes cytokinin glucosides thus liberating free cytokinins. This is Cytokinin-beta-glucosidase (TROLC) from Nicotiana tabacum (Common tobacco).